A 278-amino-acid chain; its full sequence is Ankyrin repeat and SOCS box protein 13 (278 aa).

6 ANK repeats span residues 18 to 47 (VERT…CVNQ), 51 to 80 (DSIT…QVDA), 84 to 113 (DGST…KVNP), 116 to 145 (YTAS…NLEA), 149 to 178 (HFGT…NVNA), and 181 to 210 (LHET…NIYA). Residues 229 to 278 (AKCFEYYEKTPLTLSQLCRVNLRKATGVRGLEKIAKLNIPPRLIDYLSYN) form the SOCS box domain.

It belongs to the ankyrin SOCS box (ASB) family.

Its pathway is protein modification; protein ubiquitination. May be a substrate-recognition component of a SCF-like ECS (Elongin-Cullin-SOCS-box protein) E3 ubiquitin-protein ligase complex which mediates the ubiquitination and subsequent proteasomal degradation of target proteins. This Homo sapiens (Human) protein is Ankyrin repeat and SOCS box protein 13 (ASB13).